Consider the following 125-residue polypeptide: Small ribosomal subunit protein uS13 (125 aa).

Residues 92 to 125 (RRSLPARGQRTRTNARTRKGKRKTVAGKKKAGKK) are disordered.

This sequence belongs to the universal ribosomal protein uS13 family. As to quaternary structure, part of the 30S ribosomal subunit. Forms a loose heterodimer with protein S19. Forms two bridges to the 50S subunit in the 70S ribosome.

Its function is as follows. Located at the top of the head of the 30S subunit, it contacts several helices of the 16S rRNA. In the 70S ribosome it contacts the 23S rRNA (bridge B1a) and protein L5 of the 50S subunit (bridge B1b), connecting the 2 subunits; these bridges are implicated in subunit movement. Contacts the tRNAs in the A and P-sites. The protein is Small ribosomal subunit protein uS13 of Chlorobaculum parvum (strain DSM 263 / NCIMB 8327) (Chlorobium vibrioforme subsp. thiosulfatophilum).